Consider the following 694-residue polypeptide: Elongation factor G (694 aa).

The tr-type G domain occupies 8–284 (EKLRNIGIVA…AVIDFLPSPV (277 aa)). GTP is bound by residues 17–24 (AHIDAGKT), 81–85 (DTPGH), and 135–138 (NKMD).

This sequence belongs to the TRAFAC class translation factor GTPase superfamily. Classic translation factor GTPase family. EF-G/EF-2 subfamily.

The protein localises to the cytoplasm. Its function is as follows. Catalyzes the GTP-dependent ribosomal translocation step during translation elongation. During this step, the ribosome changes from the pre-translocational (PRE) to the post-translocational (POST) state as the newly formed A-site-bound peptidyl-tRNA and P-site-bound deacylated tRNA move to the P and E sites, respectively. Catalyzes the coordinated movement of the two tRNA molecules, the mRNA and conformational changes in the ribosome. In Persephonella marina (strain DSM 14350 / EX-H1), this protein is Elongation factor G.